The sequence spans 199 residues: Fe/S biogenesis protein NfuA (199 aa).

Positions 156 and 159 each coordinate [4Fe-4S] cluster.

The protein belongs to the NfuA family. Homodimer. The cofactor is [4Fe-4S] cluster.

Its function is as follows. Involved in iron-sulfur cluster biogenesis. Binds a 4Fe-4S cluster, can transfer this cluster to apoproteins, and thereby intervenes in the maturation of Fe/S proteins. Could also act as a scaffold/chaperone for damaged Fe/S proteins. This chain is Fe/S biogenesis protein NfuA, found in Haemophilus ducreyi (strain 35000HP / ATCC 700724).